The following is a 195-amino-acid chain: Phosphoribosylglycinamide formyltransferase (195 aa).

12-14 (GSN) provides a ligand contact to N(1)-(5-phospho-beta-D-ribosyl)glycinamide. Residues lysine 65, 90–93 (MRLI), and asparagine 107 each bind (6R)-10-formyltetrahydrofolate. Histidine 109 acts as the Proton donor in catalysis.

This sequence belongs to the GART family.

It carries out the reaction N(1)-(5-phospho-beta-D-ribosyl)glycinamide + (6R)-10-formyltetrahydrofolate = N(2)-formyl-N(1)-(5-phospho-beta-D-ribosyl)glycinamide + (6S)-5,6,7,8-tetrahydrofolate + H(+). It participates in purine metabolism; IMP biosynthesis via de novo pathway; N(2)-formyl-N(1)-(5-phospho-D-ribosyl)glycinamide from N(1)-(5-phospho-D-ribosyl)glycinamide (10-formyl THF route): step 1/1. Functionally, catalyzes the transfer of a formyl group from 10-formyltetrahydrofolate to 5-phospho-ribosyl-glycinamide (GAR), producing 5-phospho-ribosyl-N-formylglycinamide (FGAR) and tetrahydrofolate. The protein is Phosphoribosylglycinamide formyltransferase of Bacillus subtilis (strain 168).